The sequence spans 36 residues: Collagen alpha-2(I) chain (36 aa).

The tract at residues 1-36 is disordered; that stretch reads GSNGEPGSAGPPGPAGLRGLPGESGAVGPAGPPGSR. 2 positions are modified to 4-hydroxyproline: P6 and P12. Residues 15–29 show a composition bias toward low complexity; the sequence is AGLRGLPGESGAVGP. A 4-hydroxyproline modification is found at P33.

It belongs to the fibrillar collagen family. As to quaternary structure, trimers of one alpha 2(I) and two alpha 1(I) chains. In terms of processing, proline residues at the third position of the tripeptide repeating unit (G-X-Y) are hydroxylated in some or all of the chains.

The protein localises to the secreted. Its subcellular location is the extracellular space. It is found in the extracellular matrix. Type I collagen is a member of group I collagen (fibrillar forming collagen). This Brachylophosaurus canadensis (Campanian hadrosaur) protein is Collagen alpha-2(I) chain.